Consider the following 622-residue polypeptide: ATP-dependent lipid A-core flippase (622 aa).

Helical transmembrane passes span 32–52 (IVAALIAIFGVAATESYLAAF), 91–111 (VWGTENKIWTVPLFLIILVVI), 192–212 (IVLLYLNWQLSLIVVLMFPLL), 286–306 (SPFSELIASIALAVVIFIALW), and 312–332 (YTTIGEFMAFIVAMLQMYAPI). Positions 33 to 344 (VAALIAIFGV…LANISIPMQT (312 aa)) constitute an ABC transmembrane type-1 domain. Residues 378-611 (FRNVDVEYRS…NGYYTMLRNI (234 aa)) form the ABC transporter domain. 410 to 417 (GRSGSGKS) is a binding site for ATP.

The protein belongs to the ABC transporter superfamily. Lipid exporter (TC 3.A.1.106) family. In terms of assembly, homodimer.

The protein localises to the cell inner membrane. The enzyme catalyses ATP + H2O + lipid A-core oligosaccharideSide 1 = ADP + phosphate + lipid A-core oligosaccharideSide 2.. Functionally, involved in lipopolysaccharide (LPS) biosynthesis. Translocates lipid A-core from the inner to the outer leaflet of the inner membrane. Transmembrane domains (TMD) form a pore in the inner membrane and the ATP-binding domain (NBD) is responsible for energy generation. This Neisseria gonorrhoeae (strain ATCC 700825 / FA 1090) protein is ATP-dependent lipid A-core flippase.